A 780-amino-acid polypeptide reads, in one-letter code: Cullin-5 (780 aa).

A Phosphoserine modification is found at Ser34. Thr210 is modified (phosphothreonine). The Cullin neddylation domain occupies Leu713 to Asp772. Lys724 participates in a covalent cross-link: Glycyl lysine isopeptide (Lys-Gly) (interchain with G-Cter in NEDD8).

It belongs to the cullin family. As to quaternary structure, component of multiple cullin-5-RING E3 ubiquitin-protein ligase complexes (ECS complexes, also named CRL5 complexes) formed of CUL5, Elongin BC (ELOB and ELOC), RNF7/RBX2 and a variable SOCS box domain-containing protein as substrate-specific recognition component. CUL5-containing ECS complexes specifically contain RNF7/RBX2, and not RBX1, as catalytic subunit. Component of the ECS(ASB2) complex with the substrate recognition component ASB2. Component of the ECS(ASB6) complex with the substrate recognition component ASB6. Component of the ECS(ASB7) complex with the substrate recognition component ASB7. Component of the ECS(ASB9) complex with the substrate recognition component ASB9. Component of the ECS(ASB11) complex with the substrate recognition component ASB11. Component of the ECS(ASB12) complex with the substrate recognition component ASB12. Component of the ECS(LRRC41) complex with the substrate recognition component LRRC41. Component of the ECS(SOCS1) complex with the substrate recognition component SOCS1. Component of the ECS(SOCS2) complex with the substrate recognition component SOCS2. Component of the ECS(WSB1) complex with the substrate recognition subunit WSB1. Component of the ECS(SOCS3) complex with the substrate recognition component SOCS3. Component of the ECS(SOCS7) complex with the substrate recognition component SOCS7. Component of the ECS(SPSB1) complex with the substrate recognition component SPSB1. Component of the ECS(SPSB3) complex with the substrate recognition component SPSB3. Component of the ECS(SPSB2) complex with the substrate recognition component SPSB2. Component of the ECS(SPSB4) complex with the substrate recognition component SPSB4. Component of the ECS(RAB40) complex with the substrate recognition subunit RAB40A, RAB40B or RAB40C. Component of the ECS(KLHDC1) complex with the substrate recognition component KLHDC1. Component of the ECS(PCMTD1) complex with the substrate recognition subunit PCMTD1. May also form complexes containing RBX1 and ELOA or VHL; additional evidence is however required to confirm this result in vivo. Interacts (when neddylated) with ARIH2; leading to activate the E3 ligase activity of ARIH2. Interacts with ERCC6; the interaction is induced by DNA damaging agents or inhibitors of RNA polymerase II elongation. Interacts with ELOA (via the BC-box). Interacts (unneddylated form) with DCUN1D1, DCUN1D2, DCUN1D3, DCUN1D4 and DCUN1D5; these interactions promote the cullin neddylation. Neddylated; which enhances the ubiquitination activity of ECS complexes and prevents binding of the inhibitor CAND1. Deneddylated via its interaction with the COP9 signalosome (CSN). In terms of tissue distribution, kidney collecting tubules.

It localises to the nucleus. It participates in protein modification; protein ubiquitination. Core component of multiple cullin-5-RING E3 ubiquitin-protein ligase complexes (ECS complexes, also named CRL5 complexes), which mediate the ubiquitination and subsequent proteasomal degradation of target proteins. Acts a scaffold protein that contributes to catalysis through positioning of the substrate and the ubiquitin-conjugating enzyme. The functional specificity of the E3 ubiquitin-protein ligase complex depends on the variable SOCS box-containing substrate recognition component. Acts as a key regulator of neuron positioning during cortex development: component of various SOCS-containing ECS complexes, such as the ECS(SOCS7) complex, that regulate reelin signaling by mediating ubiquitination and degradation of DAB1. ECS(SOCS1) seems to direct ubiquitination of JAK2. The ECS(SOCS2) complex mediates the ubiquitination and subsequent proteasomal degradation of phosphorylated EPOR and GHR. The ECS(SPSB3) complex catalyzes ubiquitination of nuclear CGAS. ECS(KLHDC1) complex is part of the DesCEND (destruction via C-end degrons) pathway and mediates ubiquitination and degradation of truncated SELENOS selenoprotein produced by failed UGA/Sec decoding, which ends with a glycine. The ECS(ASB9) complex mediates ubiquitination and degradation of CKB. As part of some ECS complex, promotes 'Lys-11'-linked ubiquitination and degradation of BTRC. As part of a multisubunit ECS complex, polyubiquitinates monoubiquitinated POLR2A. As part of the ECS(RAB40C) complex, mediates ANKRD28 ubiquitination and degradation, thereby regulating protein phosphatase 6 (PP6) complex activity and focal adhesion assembly during cell migration. As part of the ECS(RAB40A) complex, mediates RHOU 'Lys-48'-linked ubiquitination and degradation, thus inhibiting focal adhesion disassembly during cell migration. As part of the ECS(RAB40B) complex, mediates LIMA1/EPLIN and RAP2 ubiquitination, thereby regulating actin cytoskeleton dynamics and stress fiber formation during cell migration. May form a cell surface vasopressin receptor. The chain is Cullin-5 (CUL5) from Oryctolagus cuniculus (Rabbit).